A 62-amino-acid chain; its full sequence is Conotoxin TeAr151 (62 aa).

Residues 1 to 22 form the signal peptide; sequence MRCLPVFVVLLLLIASAPSVDA. A propeptide spanning residues 23-47 is cleaved from the precursor; it reads QPKTKDDVPLAPLHDNIQNTLQTLR. Met55 carries the post-translational modification Methionine sulfoxide; partial. Ser60 is modified (serine amide).

Belongs to the conotoxin T superfamily. In terms of processing, contains 2 disulfide bonds. Post-translationally, contains 2 disulfide bonds that can be either 'C1-C3, C2-C4' or 'C1-C4, C2-C3', since these disulfide connectivities have been observed for conotoxins with cysteine framework V (for examples, see AC P0DQQ7 and AC P81755).. In terms of tissue distribution, expressed by the venom duct. Is mostly present in part 5 of the venom duct (distal part near the pharynx), and less abundantly present in part 4 of the venom duct.

The protein localises to the secreted. The protein is Conotoxin TeAr151 of Conus textile (Cloth-of-gold cone).